We begin with the raw amino-acid sequence, 374 residues long: Isocitrate dehydrogenase [NAD] catalytic subunit 6, mitochondrial (374 aa).

A mitochondrion-targeting transit peptide spans 1 to 44 (MTMTAFLARRLIGNGSSQILGTSSSSSGPFISVSRAFFSSSTPI). 4 residues coordinate substrate: R127, R137, R158, and D245. Mg(2+) contacts are provided by D245, D269, and D273.

This sequence belongs to the isocitrate and isopropylmalate dehydrogenases family. In terms of assembly, heterooligomer of catalytic and regulatory subunits. Mg(2+) is required as a cofactor. Mn(2+) serves as cofactor. Ubiquitous. Predominantly expressed in leaves.

The protein localises to the mitochondrion. It carries out the reaction D-threo-isocitrate + NAD(+) = 2-oxoglutarate + CO2 + NADH. Functionally, catalytic subunit of the NAD(+)-dependent isocitrate dehydrogenase involved in the oxidative decarboxylation of isocitrate to 2-oxoglutarate. Performs an essential role in the oxidative function of the citric acid cycle. The sequence is that of Isocitrate dehydrogenase [NAD] catalytic subunit 6, mitochondrial (IDH6) from Arabidopsis thaliana (Mouse-ear cress).